Here is a 539-residue protein sequence, read N- to C-terminus: MPIEFVCKIKFAEEDEKQKGNQDGDKESLIEESCSPPTKDLAGFASASSLHGINHIFVSGRLGVRQTLWALAFLVSLALFLYQAAKCAISYLEHPHVTALNEEATPEMVFPAVTICNINRFRFSALTDADIYHLANLTGLPPKNKDGHKPTDLEYPAPDMQDIFNRTGHQLEEMLKSCNFSGQNCSAEDFTVVYTRYGKCYTFNGNKTTSRKTKQGGMGNGLEIMLDIQQDDYLPIWKETNETSLEAGIRVQIHSQDEPPYIHQLGFGVSPGFQTFVSCQEQRLTYLPQPWGNCRSTSEQMIPGYDTYSISACRLRCETLEVLRECKCRMVHMPGDANICTPSDIKCVDKALALLQKSSGDTCFCETPCNLTRYGKELSMVKIPSKGSARYLSRKYDKSEDYIRDNFLVLDIFFEALNYETIEQKKAYDVAGLLGDIGGQMGLFIGASVLTILEILDYVYEVIKHRLERLLRPQRDDKKQTQQQQQASTVATVNLEEMKAKDSSEMSRSHSEGAYANTILPNHHHHHRTHHRVSEDFAC.

The Cytoplasmic portion of the chain corresponds to 1–68 (MPIEFVCKIK…SGRLGVRQTL (68 aa)). A helical membrane pass occupies residues 69–89 (WALAFLVSLALFLYQAAKCAI). At 90-432 (SYLEHPHVTA…EQKKAYDVAG (343 aa)) the chain is on the extracellular side. Disulfide bonds link Cys-116–Cys-200 and Cys-178–Cys-185. Asn-136, Asn-165, Asn-179, Asn-184, Asn-206, and Asn-241 each carry an N-linked (GlcNAc...) asparagine glycan. Intrachain disulfides connect Cys-294–Cys-369, Cys-313–Cys-365, Cys-317–Cys-363, Cys-326–Cys-347, and Cys-328–Cys-340. A glycan (N-linked (GlcNAc...) asparagine) is linked at Asn-370. The chain crosses the membrane as a helical span at residues 433–453 (LLGDIGGQMGLFIGASVLTIL). Positions 446–448 (GAS) match the GAS motif; ion selectivity filter motif. Over 454–539 (EILDYVYEVI…HHRVSEDFAC (86 aa)) the chain is Cytoplasmic. The disordered stretch occupies residues 474–494 (QRDDKKQTQQQQQASTVATVN).

Belongs to the amiloride-sensitive sodium channel (TC 1.A.6) family. ASIC4 subfamily. In terms of assembly, homotrimer. Heterotrimer; with other ASIC proteins producing functional channels. Expressed in central nervous system.

It is found in the cell membrane. The enzyme catalyses Na(+)(in) = Na(+)(out). Inhibited by the diuretic drug amiloride. Its function is as follows. Could form pH-gated trimeric sodium channels and function as a postsynaptic excitatory receptors in the nervous system. In Danio rerio (Zebrafish), this protein is Acid-sensing ion channel 4-A.